Here is a 208-residue protein sequence, read N- to C-terminus: Holliday junction branch migration complex subunit RuvA (208 aa).

The segment at 1–63 (MIAFVSGPVA…EDSLTLYGFA (63 aa)) is domain I. The tract at residues 64–142 (NDDERQVFEL…EPVGAHIGQQ (79 aa)) is domain II. The segment at 143–147 (GIGTP) is flexible linker. The domain III stretch occupies residues 148–208 (VTSGWRDQLQ…AALQTLNRAR (61 aa)).

Belongs to the RuvA family. In terms of assembly, homotetramer. Forms an RuvA(8)-RuvB(12)-Holliday junction (HJ) complex. HJ DNA is sandwiched between 2 RuvA tetramers; dsDNA enters through RuvA and exits via RuvB. An RuvB hexamer assembles on each DNA strand where it exits the tetramer. Each RuvB hexamer is contacted by two RuvA subunits (via domain III) on 2 adjacent RuvB subunits; this complex drives branch migration. In the full resolvosome a probable DNA-RuvA(4)-RuvB(12)-RuvC(2) complex forms which resolves the HJ.

Its subcellular location is the cytoplasm. Functionally, the RuvA-RuvB-RuvC complex processes Holliday junction (HJ) DNA during genetic recombination and DNA repair, while the RuvA-RuvB complex plays an important role in the rescue of blocked DNA replication forks via replication fork reversal (RFR). RuvA specifically binds to HJ cruciform DNA, conferring on it an open structure. The RuvB hexamer acts as an ATP-dependent pump, pulling dsDNA into and through the RuvAB complex. HJ branch migration allows RuvC to scan DNA until it finds its consensus sequence, where it cleaves and resolves the cruciform DNA. The polypeptide is Holliday junction branch migration complex subunit RuvA (Streptomyces griseus subsp. griseus (strain JCM 4626 / CBS 651.72 / NBRC 13350 / KCC S-0626 / ISP 5235)).